A 258-amino-acid chain; its full sequence is Gene 3 protein (258 aa).

A compositionally biased stretch (polar residues) spans 163–176 (STENLLGQTQSSTH). A disordered region spans residues 163–258 (STENLLGQTQ…TRRYPPSFFK (96 aa)). Residues 214–240 (SIREETVSGMARAREECNSPSEHDRLT) show a composition bias toward basic and acidic residues.

The chain is Gene 3 protein from Equine herpesvirus 1 (strain Kentucky A) (EHV-1).